We begin with the raw amino-acid sequence, 192 residues long: Vascular endothelial growth factor A (192 aa).

Residues 1–26 (MNFLLTWIHWGLAALLYFHNAKVLQA) form the signal peptide. 3 disulfide bridges follow: C52–C94, C83–C128, and C87–C130. N101 is a glycosylation site (N-linked (GlcNAc...) asparagine).

It belongs to the PDGF/VEGF growth factor family. As to quaternary structure, homodimer; disulfide-linked. Also found as heterodimer with PGF. Interacts with FLT1/VEGFR1 and KDR/VEGFR2 receptors, heparan sulfate and heparin. As to expression, expressed by the venom gland, and probably other tissues.

The protein localises to the secreted. Growth factor active in angiogenesis, vasculogenesis and endothelial cell growth. Induces endothelial cell proliferation, promotes cell migration, inhibits apoptosis and induces permeabilization of blood vessels. This Agkistrodon piscivorus piscivorus (Eastern cottonmouth) protein is Vascular endothelial growth factor A.